Reading from the N-terminus, the 141-residue chain is ATP synthase epsilon chain (141 aa).

This sequence belongs to the ATPase epsilon chain family. F-type ATPases have 2 components, CF(1) - the catalytic core - and CF(0) - the membrane proton channel. CF(1) has five subunits: alpha(3), beta(3), gamma(1), delta(1), epsilon(1). CF(0) has three main subunits: a, b and c.

The protein localises to the cell inner membrane. Its function is as follows. Produces ATP from ADP in the presence of a proton gradient across the membrane. The sequence is that of ATP synthase epsilon chain from Methylobacillus flagellatus (strain ATCC 51484 / DSM 6875 / VKM B-1610 / KT).